The sequence spans 176 residues: Large ribosomal subunit protein uL6 (176 aa).

A compositionally biased stretch (basic and acidic residues) spans 151–170 (RPPEPYKGKGVRYADEQVRR). The tract at residues 151–176 (RPPEPYKGKGVRYADEQVRRKEAKKK) is disordered.

This sequence belongs to the universal ribosomal protein uL6 family. Part of the 50S ribosomal subunit.

Functionally, this protein binds to the 23S rRNA, and is important in its secondary structure. It is located near the subunit interface in the base of the L7/L12 stalk, and near the tRNA binding site of the peptidyltransferase center. The protein is Large ribosomal subunit protein uL6 of Shewanella pealeana (strain ATCC 700345 / ANG-SQ1).